Consider the following 174-residue polypeptide: ATP-dependent protease subunit HslV (174 aa).

The active site involves threonine 2. Na(+)-binding residues include glycine 157, cysteine 160, and threonine 163.

Belongs to the peptidase T1B family. HslV subfamily. A double ring-shaped homohexamer of HslV is capped on each side by a ring-shaped HslU homohexamer. The assembly of the HslU/HslV complex is dependent on binding of ATP.

Its subcellular location is the cytoplasm. The enzyme catalyses ATP-dependent cleavage of peptide bonds with broad specificity.. Its activity is regulated as follows. Allosterically activated by HslU binding. Functionally, protease subunit of a proteasome-like degradation complex believed to be a general protein degrading machinery. The chain is ATP-dependent protease subunit HslV from Cellvibrio japonicus (strain Ueda107) (Pseudomonas fluorescens subsp. cellulosa).